Consider the following 419-residue polypeptide: MFSRDMTIASFDPELSEAMEAERRRQEDHIELIASENYASPRVLEAQGSVLTNKYAEGYPGKRYYGGCEHVDEAERLAIERAKQLFGADYANVQPHSGSQANAAVYLALLQPGDTILGMSLDHGGHLTHGAKVNFSGRLFNAVQYGVCPDTGELDYAQLERLAKEHQPKMIIGGFSAYSRVVDWQRLRDIADSVGAYLLVDMAHVAGLVAAGVYPSPVQIADVTTTTTHKTLRGPRGGLILARANAEVEKKLNSLVFPGTQGGPLMHAIAGKAVAFKEALEPEFKAYQQQVVANARAMAQGLIERGYKVVSGGTDNHLFLIDLVDKGLTGKAADAALGKAHITVNKNTVPNDPQSPFVTSGLRIGTPAITTRGFKEEECRELAGWMADVLDDIENEDVIARVREQVTQVCRRLPVYQQG.

Residues leucine 121 and 125-127 (GHL) each bind (6S)-5,6,7,8-tetrahydrofolate. Lysine 230 carries the post-translational modification N6-(pyridoxal phosphate)lysine. 355-357 (SPF) lines the (6S)-5,6,7,8-tetrahydrofolate pocket.

This sequence belongs to the SHMT family. As to quaternary structure, homodimer. It depends on pyridoxal 5'-phosphate as a cofactor.

It localises to the cytoplasm. It catalyses the reaction (6R)-5,10-methylene-5,6,7,8-tetrahydrofolate + glycine + H2O = (6S)-5,6,7,8-tetrahydrofolate + L-serine. Its pathway is one-carbon metabolism; tetrahydrofolate interconversion. It participates in amino-acid biosynthesis; glycine biosynthesis; glycine from L-serine: step 1/1. Catalyzes the reversible interconversion of serine and glycine with tetrahydrofolate (THF) serving as the one-carbon carrier. This reaction serves as the major source of one-carbon groups required for the biosynthesis of purines, thymidylate, methionine, and other important biomolecules. Also exhibits THF-independent aldolase activity toward beta-hydroxyamino acids, producing glycine and aldehydes, via a retro-aldol mechanism. This is Serine hydroxymethyltransferase from Alkalilimnicola ehrlichii (strain ATCC BAA-1101 / DSM 17681 / MLHE-1).